The chain runs to 50 residues: Disintegrin pyramidin-A (50 aa).

The region spanning 1–47 is the Disintegrin domain; that stretch reads DCASGPCCRDCKFLKEGTICKRARGDNMDDYCNGKTCDCPRNPHKGE. 4 cysteine pairs are disulfide-bonded: Cys-2-Cys-11, Cys-7-Cys-32, Cys-8-Cys-37, and Cys-20-Cys-39. Positions 24–26 match the Cell attachment site motif; the sequence is RGD.

Belongs to the venom metalloproteinase (M12B) family. P-II subfamily. P-IIa sub-subfamily. Monomer (disintegrin). Expressed by the venom gland.

Its subcellular location is the secreted. Functionally, inhibits ADP-induced human platelet aggregation. This chain is Disintegrin pyramidin-A, found in Echis pyramidum leakeyi (Leakey's carpet viper).